The following is a 300-amino-acid chain: ETS homologous factor (300 aa).

Residues 29–115 form the PNT domain; sequence STCNVSSGFF…SNLQHLKWNG (87 aa). The tract at residues 183–202 is disordered; it reads ESPDMKKEQDPPAKCHTKKH. A compositionally biased stretch (basic and acidic residues) spans 185–195; it reads PDMKKEQDPPA. Positions 207-289 form a DNA-binding region, ETS; the sequence is THLWEFIRDI…DGRRLVYKFG (83 aa).

It belongs to the ETS family.

The protein resides in the nucleus. Functionally, transcriptional activator that may play a role in regulating epithelial cell differentiation and proliferation. May act as a repressor for a specific subset of ETS/AP-1-responsive genes, and as a modulator of the nuclear response to mitogen-activated protein kinase signaling cascades. Binds to DNA sequences containing the consensus nucleotide core sequence GGAA. Involved in regulation of TNFRSF10B/DR5 expression through Ets-binding sequences on the TNFRSF10B/DR5 promoter. This Pan troglodytes (Chimpanzee) protein is ETS homologous factor (EHF).